The chain runs to 384 residues: Galactokinase (384 aa).

Substrate is bound at residue 35–38 (EHTD). ATP is bound by residues S69 and 125–131 (GAGLSSS). S131 and E163 together coordinate Mg(2+). The active-site Proton acceptor is the D175. Residue Y224 coordinates substrate.

The protein belongs to the GHMP kinase family. GalK subfamily.

It localises to the cytoplasm. It carries out the reaction alpha-D-galactose + ATP = alpha-D-galactose 1-phosphate + ADP + H(+). It participates in carbohydrate metabolism; galactose metabolism. Its function is as follows. Catalyzes the transfer of the gamma-phosphate of ATP to D-galactose to form alpha-D-galactose-1-phosphate (Gal-1-P). The polypeptide is Galactokinase (Aliivibrio fischeri (strain MJ11) (Vibrio fischeri)).